The sequence spans 151 residues: Ribosome maturation factor RimP (151 aa).

It belongs to the RimP family.

The protein localises to the cytoplasm. In terms of biological role, required for maturation of 30S ribosomal subunits. The protein is Ribosome maturation factor RimP of Persephonella marina (strain DSM 14350 / EX-H1).